The chain runs to 148 residues: Putative cyclin-dependent kinase inhibitor SPL2 (148 aa).

2 positions are modified to phosphoserine: Ser-59 and Ser-86.

Its subcellular location is the cytoplasmic granule. It localises to the cytoplasm. Functionally, putative cyclin-dependent kinase (CDK) inhibitor necessary and sufficient for PHO pathway-dependent down-regulation of low-affinity phosphate transport. This Saccharomyces cerevisiae (strain ATCC 204508 / S288c) (Baker's yeast) protein is Putative cyclin-dependent kinase inhibitor SPL2 (SPL2).